Here is a 179-residue protein sequence, read N- to C-terminus: Large ribosomal subunit protein uL5 (179 aa).

Belongs to the universal ribosomal protein uL5 family. Part of the 50S ribosomal subunit; part of the 5S rRNA/L5/L18/L25 subcomplex. Contacts the 5S rRNA and the P site tRNA. Forms a bridge to the 30S subunit in the 70S ribosome.

Functionally, this is one of the proteins that bind and probably mediate the attachment of the 5S RNA into the large ribosomal subunit, where it forms part of the central protuberance. In the 70S ribosome it contacts protein S13 of the 30S subunit (bridge B1b), connecting the 2 subunits; this bridge is implicated in subunit movement. Contacts the P site tRNA; the 5S rRNA and some of its associated proteins might help stabilize positioning of ribosome-bound tRNAs. This Staphylococcus carnosus (strain TM300) protein is Large ribosomal subunit protein uL5.